An 88-amino-acid chain; its full sequence is Small ribosomal subunit protein bS20 (88 aa).

Residues 1–21 form a disordered region; sequence MANTTSAKKATRKIARRTAVN.

This sequence belongs to the bacterial ribosomal protein bS20 family.

Binds directly to 16S ribosomal RNA. The sequence is that of Small ribosomal subunit protein bS20 from Agrobacterium fabrum (strain C58 / ATCC 33970) (Agrobacterium tumefaciens (strain C58)).